Consider the following 439-residue polypeptide: Methylenetetrahydrofolate--tRNA-(uracil-5-)-methyltransferase TrmFO (439 aa).

Residue 7-12 participates in FAD binding; the sequence is GAGLAG.

The protein belongs to the MnmG family. TrmFO subfamily. The cofactor is FAD.

It localises to the cytoplasm. It catalyses the reaction uridine(54) in tRNA + (6R)-5,10-methylene-5,6,7,8-tetrahydrofolate + NADH + H(+) = 5-methyluridine(54) in tRNA + (6S)-5,6,7,8-tetrahydrofolate + NAD(+). The enzyme catalyses uridine(54) in tRNA + (6R)-5,10-methylene-5,6,7,8-tetrahydrofolate + NADPH + H(+) = 5-methyluridine(54) in tRNA + (6S)-5,6,7,8-tetrahydrofolate + NADP(+). Functionally, catalyzes the folate-dependent formation of 5-methyl-uridine at position 54 (M-5-U54) in all tRNAs. This is Methylenetetrahydrofolate--tRNA-(uracil-5-)-methyltransferase TrmFO from Heliobacterium modesticaldum (strain ATCC 51547 / Ice1).